We begin with the raw amino-acid sequence, 397 residues long: MTTSQFKKSKLIENNSQSLEILKEKNFNDVPLDVAIEIFMRLPVKSVARFLLLSKFWAEIIRSRHFITSFQVRSSLQPRLLVVFIDLNKQWNCEDWYFFSLSSSTTSYLSRVTCPFPDYVHYSHYVNGLISHGYGLEKFITNPSTGKSTVLGRVQTNSKVAQCFLGYDPVNDEYKLLVLCMKEKMQRHDGRTRILQLSSQHQVFPLGVKKKPWRMIDYTTPHGPVLNSVCIDGVLYYVAFTGEDLSQLSLMRFDLGSEKLDLFTSLPADFPAAFLHGFTLMRYKGKVALATKTLFIGIEVWVLDQQAEIHGWLKKSFSIKGVRRWLFCDLFITGTTHTGEFILAPRFYSNSFYVIYYNPDTKSLRKTKVEVHGGYDFKHRETKAMVFPDYVETVRLL.

Residues Glu-24–Phe-70 form the F-box domain.

Part of a SCF (ASK-cullin-F-box) protein ligase complex. Interacts with ASK16.

The protein localises to the nucleus. It functions in the pathway protein modification; protein ubiquitination. Its function is as follows. Component of SCF(ASK-cullin-F-box) E3 ubiquitin ligase complexes, which may mediate the ubiquitination and subsequent proteasomal degradation of target proteins. The sequence is that of F-box protein At4g11590 from Arabidopsis thaliana (Mouse-ear cress).